The primary structure comprises 73 residues: Putative defensin-like protein 270 (73 aa).

Residues Met-1–Ser-23 form the signal peptide. Cystine bridges form between Cys-33–Cys-72, Cys-39–Cys-60, Cys-45–Cys-70, and Cys-49–Cys-71.

The protein belongs to the DEFL family.

It localises to the secreted. The polypeptide is Putative defensin-like protein 270 (Arabidopsis thaliana (Mouse-ear cress)).